Here is a 695-residue protein sequence, read N- to C-terminus: WD repeat-containing protein 93 (695 aa).

Residues 1–35 (MSSFKGNQAQKRRLSVFPKGPLEIPSPTEADWPKD) form a disordered region. A WD repeat occupies 421–460 (PCAAPIVMSQISSFSSYLALVCEDGVLILWDLAEGFLFGV).

As to expression, testis-specific. Expressed in spermatogonia, spermatocytes and spermatids.

The chain is WD repeat-containing protein 93 (Wdr93) from Mus musculus (Mouse).